Consider the following 135-residue polypeptide: Small ribosomal subunit protein uS11 (135 aa).

Residues 1–10 (MPPKTRSQTG) are compositionally biased toward polar residues. The disordered stretch occupies residues 1–28 (MPPKTRSQTGAKKVRRKEKKNVAHGHAH). Over residues 12 to 28 (KKVRRKEKKNVAHGHAH) the composition is skewed to basic residues.

Belongs to the universal ribosomal protein uS11 family. Part of the 30S ribosomal subunit. Interacts with proteins S7 and S18. Binds to IF-3.

Located on the platform of the 30S subunit, it bridges several disparate RNA helices of the 16S rRNA. Forms part of the Shine-Dalgarno cleft in the 70S ribosome. This is Small ribosomal subunit protein uS11 from Acidothermus cellulolyticus (strain ATCC 43068 / DSM 8971 / 11B).